The following is a 307-amino-acid chain: Protoheme IX farnesyltransferase (307 aa).

8 helical membrane-spanning segments follow: residues 38–58, 65–85, 108–128, 131–151, 158–178, 186–206, 251–271, and 287–307; these read NTLTVFTGFWLALHFNGLSVL, FFTIVGSGLVMAGVCCLNNYI, PGFALTFGLVILLLGFVFLLL, PMAVLMGFIGAFTYVVLYSLW, LNTVVGSISGAVPPLIGWAAI, IAWMLFLIMFIWQIPHFLALA, LGITFMVIATLLNIGWIVLGF, and FVYSLNYLTILFVSMIVVTFF.

This sequence belongs to the UbiA prenyltransferase family. Protoheme IX farnesyltransferase subfamily. Interacts with CtaA.

It localises to the cell membrane. The enzyme catalyses heme b + (2E,6E)-farnesyl diphosphate + H2O = Fe(II)-heme o + diphosphate. The protein operates within porphyrin-containing compound metabolism; heme O biosynthesis; heme O from protoheme: step 1/1. Its function is as follows. Converts heme B (protoheme IX) to heme O by substitution of the vinyl group on carbon 2 of heme B porphyrin ring with a hydroxyethyl farnesyl side group. This Bacillus thuringiensis (strain Al Hakam) protein is Protoheme IX farnesyltransferase.